Consider the following 630-residue polypeptide: 1-deoxy-D-xylulose-5-phosphate synthase (630 aa).

Residues His-87 and 128–130 (GHS) contribute to the thiamine diphosphate site. Asp-159 lines the Mg(2+) pocket. Thiamine diphosphate is bound by residues 160 to 161 (GA), Asn-188, Phe-295, and Glu-377. Residue Asn-188 participates in Mg(2+) binding.

It belongs to the transketolase family. DXPS subfamily. As to quaternary structure, homodimer. Requires Mg(2+) as cofactor. Thiamine diphosphate is required as a cofactor.

The catalysed reaction is D-glyceraldehyde 3-phosphate + pyruvate + H(+) = 1-deoxy-D-xylulose 5-phosphate + CO2. Its pathway is metabolic intermediate biosynthesis; 1-deoxy-D-xylulose 5-phosphate biosynthesis; 1-deoxy-D-xylulose 5-phosphate from D-glyceraldehyde 3-phosphate and pyruvate: step 1/1. Functionally, catalyzes the acyloin condensation reaction between C atoms 2 and 3 of pyruvate and glyceraldehyde 3-phosphate to yield 1-deoxy-D-xylulose-5-phosphate (DXP). The chain is 1-deoxy-D-xylulose-5-phosphate synthase from Pseudomonas savastanoi pv. phaseolicola (strain 1448A / Race 6) (Pseudomonas syringae pv. phaseolicola (strain 1448A / Race 6)).